A 317-amino-acid polypeptide reads, in one-letter code: Single myb histone 6 (317 aa).

An HTH myb-type domain is found at 1–61 (MGAPKQRWTS…KWRNMNVIVS (61 aa)). Positions 28-57 (WRTILKDPEFSSTLCYRSNVDLKDKWRNMN) form a DNA-binding region, H-T-H motif. One can recognise an H15 domain in the interval 121 to 189 (KSHRLDNIIM…KVNRKYRIAP (69 aa)). Positions 244 to 288 (VAAARAVAEAEAIMAEAEAAAKEAEAAEAEAQAAQAFAEAAFLTL) form a coiled coil.

Belongs to the histone H1/H5 family. SMH subfamily. In terms of assembly, forms a homodimer and heterodimers.

The protein localises to the nucleus. It localises to the chromosome. The protein resides in the nucleolus. Its subcellular location is the telomere. Its function is as follows. Binds preferentially double-stranded telomeric repeats, but may also bind to the single telomeric strand. The sequence is that of Single myb histone 6 (SMH6) from Zea mays (Maize).